A 315-amino-acid polypeptide reads, in one-letter code: WD repeat domain-containing protein 83 (315 aa).

7 WD repeats span residues 23 to 62 (CGQG…LLRT), 65 to 104 (GHGY…VVRK), 107 to 146 (GHAG…PEPV), 151 to 188 (EARD…LFSD), 190 to 228 (VGSP…LLGE), 231 to 272 (GHKN…LALA), and 275 to 313 (VGSG…AEDG).

Belongs to the WD repeat MORG1 family. As to quaternary structure, interacts with EGLN3/PHD3. Interacts with ERK signaling proteins MAP2K1/MEK1, MAP2K2/MEK2, LAMTOR3, ARAF/Raf-1, MAPK1/ERK2 and MAPK3/ERK1. Identified in the spliceosome C complex. Interacts with PARD6B and CRB3. Interacts strongly with GTP-bound RRAGA but not with inactive GDP-bound. Interacts with p62/SQSTM1.

It localises to the cytoplasm. It is found in the lysosome. The protein localises to the nucleus. In terms of biological role, molecular scaffold protein for various multimeric protein complexes. Acts as a module in the assembly of a multicomponent scaffold for the ERK pathway, linking ERK responses to specific agonists. At low concentrations it enhances ERK activation, whereas high concentrations lead to the inhibition of ERK activation. Also involved in response to hypoxia by acting as a negative regulator of HIF1A/HIF-1-alpha via its interaction with EGLN3/PHD3. May promote degradation of HIF1A. May act by recruiting signaling complexes to a specific upstream activator. May also be involved in pre-mRNA splicing. Participates in tight junction development by regulating apico-basal polarity, a key step in tissue development and organization. Mechanistically, regulates the translocation of PAR6-aPKC from the cytoplasm to the apical surface by acting as an adapter between PARD6B AND CRB3. Also acts as a negative regulator of mTORC1 under nutrient-rich conditions by binding to the active Rag GTPases to inhibit mTORC1 localization to the lysosome and phosphorylation of downstream targets. This facilitates constitutive basal autophagy during nutrient availability. This is WD repeat domain-containing protein 83 (WDR83) from Homo sapiens (Human).